A 399-amino-acid polypeptide reads, in one-letter code: Argininosuccinate synthase (399 aa).

Residue 8 to 16 coordinates ATP; the sequence is AYSGGLDTT. Tyr87 is an L-citrulline binding site. Gly117 contributes to the ATP binding site. Positions 119, 123, and 124 each coordinate L-aspartate. Asn123 serves as a coordination point for L-citrulline. L-citrulline is bound by residues Arg127, Ser175, Glu259, and Tyr271.

It belongs to the argininosuccinate synthase family. Type 1 subfamily. As to quaternary structure, homotetramer.

The protein localises to the cytoplasm. The catalysed reaction is L-citrulline + L-aspartate + ATP = 2-(N(omega)-L-arginino)succinate + AMP + diphosphate + H(+). Its pathway is amino-acid biosynthesis; L-arginine biosynthesis; L-arginine from L-ornithine and carbamoyl phosphate: step 2/3. The protein is Argininosuccinate synthase of Corynebacterium urealyticum (strain ATCC 43042 / DSM 7109).